A 387-amino-acid chain; its full sequence is Protein RecA (387 aa).

78-85 (GPESSGKT) lines the ATP pocket. Basic and acidic residues predominate over residues 350-369 (QTREVKSIERDPKETKETKS). The tract at residues 350 to 387 (QTREVKSIERDPKETKETKSKQPVSFSTEAEVDIAVGE) is disordered.

It belongs to the RecA family.

The protein resides in the cytoplasm. In terms of biological role, can catalyze the hydrolysis of ATP in the presence of single-stranded DNA, the ATP-dependent uptake of single-stranded DNA by duplex DNA, and the ATP-dependent hybridization of homologous single-stranded DNAs. It interacts with LexA causing its activation and leading to its autocatalytic cleavage. The chain is Protein RecA from Leptospira meyeri.